Here is a 492-residue protein sequence, read N- to C-terminus: Catalase isozyme 2 (492 aa).

Active-site residues include His-65 and Asn-138. Tyr-348 lines the heme pocket.

This sequence belongs to the catalase family. In terms of assembly, homotetramer. Heme serves as cofactor.

It is found in the peroxisome. It carries out the reaction 2 H2O2 = O2 + 2 H2O. Occurs in almost all aerobically respiring organisms and serves to protect cells from the toxic effects of hydrogen peroxide. This Nicotiana plumbaginifolia (Leadwort-leaved tobacco) protein is Catalase isozyme 2 (CAT2).